Reading from the N-terminus, the 569-residue chain is Aspartokinase 1, chloroplastic (569 aa).

The N-terminal 90 residues, 1–90 (MAATRVRCCH…VDEKGITCVM (90 aa)), are a transit peptide targeting the chloroplast. ATP contacts are provided by lysine 91, glycine 94, and serine 123. Glutamate 207 is a binding site for substrate. ACT domains follow at residues 405–483 (IAST…AIIS) and 484–560 (LIGN…GNGS). The L-lysine site is built by glutamine 413 and glycine 415. Serine 430 is a binding site for S-adenosyl-L-methionine. Residues valine 431, aspartate 432, and serine 437 each contribute to the L-lysine site. Residues serine 452 and arginine 453 each coordinate S-adenosyl-L-methionine.

Belongs to the aspartokinase family. As to quaternary structure, homodimer.

Its subcellular location is the plastid. It localises to the chloroplast. It catalyses the reaction L-aspartate + ATP = 4-phospho-L-aspartate + ADP. It participates in amino-acid biosynthesis; L-lysine biosynthesis via DAP pathway; (S)-tetrahydrodipicolinate from L-aspartate: step 1/4. The protein operates within amino-acid biosynthesis; L-methionine biosynthesis via de novo pathway; L-homoserine from L-aspartate: step 1/3. Its pathway is amino-acid biosynthesis; L-threonine biosynthesis; L-threonine from L-aspartate: step 1/5. With respect to regulation, inhibited by S-adenosyl-L-methionine (SAM) and lysine in a synergistic manner. No inhibition by threonine, leucine or SAM alone, and no activation or inhibition by alanine, cysteine, isoleucine, serine, valine, methionine, glutamine, asparagine, glutamic acid or arginine. Involved in the first step of essential amino acids lysine, threonine, methionine and isoleucine synthesis via the aspartate-family pathway. The polypeptide is Aspartokinase 1, chloroplastic (AK1) (Arabidopsis thaliana (Mouse-ear cress)).